The chain runs to 393 residues: S-adenosylmethionine synthase 4 (393 aa).

Residue E9 participates in Mg(2+) binding. Residue H15 coordinates ATP. E43 is a binding site for K(+). Residues E56 and Q99 each contribute to the L-methionine site. ATP is bound by residues 167-169, 235-238, D246, 252-253, A269, K273, and K277; these read DGK, SGRF, and RK. D246 serves as a coordination point for L-methionine. K277 contacts L-methionine.

This sequence belongs to the AdoMet synthase family. In terms of assembly, homotetramer. The cofactor is Mn(2+). Requires Mg(2+) as cofactor. Co(2+) is required as a cofactor. It depends on K(+) as a cofactor. Detected in trichomes (at the protein level).

Its subcellular location is the cytoplasm. The enzyme catalyses L-methionine + ATP + H2O = S-adenosyl-L-methionine + phosphate + diphosphate. Its pathway is amino-acid biosynthesis; S-adenosyl-L-methionine biosynthesis; S-adenosyl-L-methionine from L-methionine: step 1/1. Its function is as follows. Catalyzes the formation of S-adenosylmethionine from methionine and ATP. The reaction comprises two steps that are both catalyzed by the same enzyme: formation of S-adenosylmethionine (AdoMet) and triphosphate, and subsequent hydrolysis of the triphosphate. The sequence is that of S-adenosylmethionine synthase 4 (METK4) from Arabidopsis thaliana (Mouse-ear cress).